The chain runs to 218 residues: Akirin (218 aa).

Residues 96–150 (KAIPRSNDFDDDGDQRGDGCSSNYSKAYRAPSSPKSGSDSEGEAPSTSVTDRSSA) form a disordered region. Polar residues predominate over residues 128–147 (SPKSGSDSEGEAPSTSVTDR).

This sequence belongs to the akirin family. Interacts with hda-1, a component of the NuRD complex. Interacts with let-418, a component of the NuRD and MEC complexes. Interacts with the transcription factor ceh-18. Interacts with ima-2. In terms of tissue distribution, localizes to somatic tissues throughout the body, including muscle cells. Expressed in lateral epithelial seam cells, the hyp7 epidermal syncytium, and multiple head and tail neurons.

Its subcellular location is the nucleus. Molecular adapter that acts as a bridge between a variety of multiprotein complexes, and which is involved in antifungal innate immunity, development of the muscle and sister chromatid cohesion. Plays a role in antifungal innate immunity by acting as a bridge between components of the NuRD (Nucleosome Remodeling and Deacetylase) and MEC chromatin remodeling complexes. NuRD and MEC complexes bind to the promoters of antimicrobial peptide genes and may recruit other proteins such as ceh-18 to control gene expression in response to fungal infection. During meiotic prophase I, plays a role in the disassembly of synaptonemal complex proteins and in the regulation of chromosome condensation and segregation. Together with nuclear import receptor ima-2, required for the import and load of cohesin complex proteins in meiotic nuclei, possibly by acting as a bridge between ima-2 and cohesins. Required for embryonic development of muscle tissue. The chain is Akirin from Caenorhabditis elegans.